Here is a 221-residue protein sequence, read N- to C-terminus: Riboflavin kinase (221 aa).

Positions Met1–Ser92 are H-T-H motif-like. The interval Leu93–Leu221 is riboflavin kinase. CDP is bound at residue Gly102–Ala107. Thr131 and Asn133 together coordinate Mg(2+). Residues Thr188 and Glu196 each contribute to the FMN site. Glu201–Arg204 serves as a coordination point for CDP.

It belongs to the archaeal riboflavin kinase family. It depends on Mg(2+) as a cofactor.

It carries out the reaction riboflavin + CTP = CDP + FMN + H(+). The protein operates within cofactor biosynthesis; FMN biosynthesis; FMN from riboflavin (CTP route): step 1/1. Catalyzes the CTP-dependent phosphorylation of riboflavin (vitamin B2) to form flavin mononucleotide (FMN). The protein is Riboflavin kinase (ribK) of Methanospirillum hungatei JF-1 (strain ATCC 27890 / DSM 864 / NBRC 100397 / JF-1).